The following is a 454-amino-acid chain: Transmembrane protein adipocyte-associated 1 homolog (454 aa).

N-linked (GlcNAc...) asparagine glycans are attached at residues Asn26 and Asn44. Transmembrane regions (helical) follow at residues 80 to 100 (AILI…TSVI), 113 to 133 (AFTL…VYSM), 151 to 171 (IIIK…GLLF), 180 to 200 (ILIA…VQVI), and 224 to 244 (FVFW…IMCL). Asn258 carries an N-linked (GlcNAc...) asparagine glycan. 2 helical membrane passes run 262–282 (FIYC…AALI) and 290–310 (LCFV…IIYF). N-linked (GlcNAc...) asparagine glycans are attached at residues Asn322 and Asn323. Residues 408 to 454 (RTGSDDFAHHRDSMLSEPSTGTTTRHLKGLGPQGSLVFEEDPSSLRL) are disordered. Residues 410 to 421 (GSDDFAHHRDSM) are compositionally biased toward basic and acidic residues. Positions 445 to 454 (FEEDPSSLRL) are enriched in acidic residues.

This sequence belongs to the UPF0359 family.

It is found in the membrane. This is Transmembrane protein adipocyte-associated 1 homolog (tpra-1) from Caenorhabditis briggsae.